We begin with the raw amino-acid sequence, 398 residues long: MSEGNAAGEPSNPGGPRPLLSGGRGLIGRRPAPPLTPGRLPSIRSRDLTLGGVKKKTFTPNIISRKIKEEPKEEVTMKKEKRERDRDRQREGHGRGRGRPEVIQSHSIFEQGPAEMMKKKGNWDKTVDMSDMGPSHIINIKKEKRETDEETKQILRMLEKDDFIDDPGLKNDTRNMPVQLPLAHSGWLFKEESEEPEAKPFSAGPKEEDMEVDVPAVKVKEEPRDEEEEAKVKAPPRAARKTPGLPKDVSVAELLRELSLMKDEELLFLQLPDTLPGQPPTQDIKPVKTEVQGEDGQMVVIKQEKDREARLAENACTLADLTEGQVGKLLIRKSGKVQLLLGKVTLDVTMGTTCSFLQELVSVGLGDSRTGEMTVLGHVKHKLVCSPDFESLLDHKHR.

A disordered region spans residues 1–149 (MSEGNAAGEP…IKKEKRETDE (149 aa)). Residue serine 2 is modified to N-acetylserine. Serine 42 bears the Phosphoserine mark. 3 stretches are compositionally biased toward basic and acidic residues: residues 66–100 (KIKEEPKEEVTMKKEKRERDRDRQREGHGRGRGRP), 116–128 (MMKKKGNWDKTVD), and 140–149 (IKKEKRETDE). Glycyl lysine isopeptide (Lys-Gly) (interchain with G-Cter in SUMO2) cross-links involve residues lysine 68 and lysine 78. Arginine 95, arginine 97, and arginine 99 each carry omega-N-methylarginine. Residues lysine 141, lysine 152, lysine 160, lysine 190, lysine 199, lysine 206, lysine 220, lysine 285, lysine 302, and lysine 396 each participate in a glycyl lysine isopeptide (Lys-Gly) (interchain with G-Cter in SUMO2) cross-link. The segment at 191-244 (EESEEPEAKPFSAGPKEEDMEVDVPAVKVKEEPRDEEEEAKVKAPPRAARKTPG) is disordered.

It belongs to the eukaryotic RPC4/POLR3D RNA polymerase subunit family. Component of the RNA polymerase III complex consisting of 17 subunits: a ten-subunit horseshoe-shaped catalytic core composed of POLR3A/RPC1, POLR3B/RPC2, POLR1C/RPAC1, POLR1D/RPAC2, POLR3K/RPC10, POLR2E/RPABC1, POLR2F/RPABC2, POLR2H/RPABC3, POLR2K/RPABC4 and POLR2L/RPABC5; a mobile stalk composed of two subunits POLR3H/RPC8 and CRCP/RPC9, protruding from the core and functioning primarily in transcription initiation; and additional subunits homologous to general transcription factors of the RNA polymerase II machinery, POLR3C/RPC3-POLR3F/RPC6-POLR3G/RPC7 heterotrimer required for transcription initiation and POLR3D/RPC4-POLR3E/RPC5 heterodimer involved in both transcription initiation and termination. Sumoylation on Lys-141 can serve as a signal to mark misfolded Pol III for proteasomal degradation.

The protein resides in the nucleus. Functionally, DNA-dependent RNA polymerase catalyzes the transcription of DNA into RNA using the four ribonucleoside triphosphates as substrates. Specific peripheric component of RNA polymerase III (Pol III) which synthesizes small non-coding RNAs including 5S rRNA, snRNAs, tRNAs and miRNAs from at least 500 distinct genomic loci. Enables recruitment of Pol III at transcription initiation site and drives transcription initiation from both type 2 and type 3 DNA promoters. Required for efficient transcription termination and reinitiation. Pol III plays a key role in sensing and limiting infection by intracellular bacteria and DNA viruses. Acts as nuclear and cytosolic DNA sensor involved in innate immune response. Can sense non-self dsDNA that serves as template for transcription into dsRNA. The non-self RNA polymerase III transcripts, such as Epstein-Barr virus-encoded RNAs (EBERs) induce type I interferon and NF-kappa-B through the RIG-I pathway. In Mus musculus (Mouse), this protein is DNA-directed RNA polymerase III subunit RPC4.